A 430-amino-acid polypeptide reads, in one-letter code: Serine--tRNA ligase (430 aa).

An L-serine-binding site is contributed by 237–239 (TAE). Position 268 to 270 (268 to 270 (RSE)) interacts with ATP. E291 is an L-serine binding site. 355–358 (EISS) lines the ATP pocket. Position 391 (S391) interacts with L-serine.

The protein belongs to the class-II aminoacyl-tRNA synthetase family. Type-1 seryl-tRNA synthetase subfamily. As to quaternary structure, homodimer. The tRNA molecule binds across the dimer.

It is found in the cytoplasm. It catalyses the reaction tRNA(Ser) + L-serine + ATP = L-seryl-tRNA(Ser) + AMP + diphosphate + H(+). It carries out the reaction tRNA(Sec) + L-serine + ATP = L-seryl-tRNA(Sec) + AMP + diphosphate + H(+). The protein operates within aminoacyl-tRNA biosynthesis; selenocysteinyl-tRNA(Sec) biosynthesis; L-seryl-tRNA(Sec) from L-serine and tRNA(Sec): step 1/1. Functionally, catalyzes the attachment of serine to tRNA(Ser). Is also able to aminoacylate tRNA(Sec) with serine, to form the misacylated tRNA L-seryl-tRNA(Sec), which will be further converted into selenocysteinyl-tRNA(Sec). This is Serine--tRNA ligase from Yersinia pseudotuberculosis serotype O:1b (strain IP 31758).